The chain runs to 125 residues: Large ribosomal subunit protein bL19 (125 aa).

This sequence belongs to the bacterial ribosomal protein bL19 family.

Its function is as follows. This protein is located at the 30S-50S ribosomal subunit interface and may play a role in the structure and function of the aminoacyl-tRNA binding site. The sequence is that of Large ribosomal subunit protein bL19 from Ehrlichia canis (strain Jake).